Reading from the N-terminus, the 262-residue chain is Linker for activation of T-cells family member 1 (262 aa).

The Extracellular portion of the chain corresponds to 1-4; that stretch reads MEEA. A helical; Signal-anchor for type III membrane protein transmembrane segment spans residues 5–27; that stretch reads ILVPCVLGLLLLPILAMLMALCV. S-palmitoyl cysteine attachment occurs at residues C26 and C29. The Cytoplasmic portion of the chain corresponds to 28–262; the sequence is HCHRLPGSYD…PDYENLQELN (235 aa). T39 carries the post-translational modification Phosphothreonine. Residues S40, S41, S43, S84, S101, S106, and S109 each carry the phosphoserine modification. The tract at residues 69 to 115 is disordered; that stretch reads SYPPLSQPDLLPIPRSPQPLGGSHRTPSSRRDSDGANSVASYENEGA. Residues Y110, Y156, Y161, Y200, and Y220 each carry the phosphotyrosine modification. The tract at residues 161-164 is interaction with PLCG1; the sequence is YLVV. Interaction with GRB2, GRAP2 and PIK3R1 regions lie at residues 200 to 203 and 220 to 223; these read YVNV. The disordered stretch occupies residues 206 to 262; that stretch reads SGESAEASLDGSREYVNVSQELHPGAAKTEPAALSSQEAEEVEEEGAPDYENLQELN. Phosphoserine is present on residues S224, S240, and S241. Positions 243–253 are enriched in acidic residues; the sequence is EAEEVEEEGAP. Y255 bears the Phosphotyrosine mark.

In terms of assembly, when phosphorylated, interacts directly with the PIK3R1 subunit of phosphoinositide 3-kinase and the SH2 domains of GRB2, GRAP, GRAP2, PLCG1 and PLCG2. Interacts indirectly with CBL, SOS, VAV, and LCP2. Interacts with SHB, SKAP2 and CLNK. Interacts with FCGR1A. Interacts with GRB2, PLCG1 and THEMIS upon TCR activation in thymocytes. Interacts with THEMIS2. As to quaternary structure, (Microbial infection) Interacts with herpes virus 1/HHV-1 protein US3; this interaction prevents the interaction between LAT and TRAF6. Post-translationally, phosphorylated on tyrosines by ZAP70 upon TCR activation, or by SYK upon other immunoreceptor activation; which leads to the recruitment of multiple signaling molecules. Is one of the most prominently tyrosine-phosphorylated proteins detected following TCR engagement. May be dephosphorylated by PTPRJ. Phosphorylated by ITK leading to the recruitment of VAV1 to LAT-containing complexes. Palmitoylation of Cys-26 and Cys-29 is required for raft targeting and efficient phosphorylation. In terms of processing, 'Lys-63'-linked ubiquitinated by TRAF6. As to expression, expressed in thymus, T-cells, NK cells, mast cells and, at lower levels, in spleen. Present in T-cells but not B-cells (at protein level).

It is found in the cell membrane. Functionally, required for TCR (T-cell antigen receptor)- and pre-TCR-mediated signaling, both in mature T-cells and during their development. Involved in FCGR3 (low affinity immunoglobulin gamma Fc region receptor III)-mediated signaling in natural killer cells and FCER1 (high affinity immunoglobulin epsilon receptor)-mediated signaling in mast cells. Couples activation of these receptors and their associated kinases with distal intracellular events such as mobilization of intracellular calcium stores, PKC activation, MAPK activation or cytoskeletal reorganization through the recruitment of PLCG1, GRB2, GRAP2, and other signaling molecules. This chain is Linker for activation of T-cells family member 1 (LAT), found in Homo sapiens (Human).